Consider the following 151-residue polypeptide: Large ribosomal subunit protein bL9 (151 aa).

The protein belongs to the bacterial ribosomal protein bL9 family.

Its function is as follows. Binds to the 23S rRNA. The polypeptide is Large ribosomal subunit protein bL9 (Mycobacteroides abscessus (strain ATCC 19977 / DSM 44196 / CCUG 20993 / CIP 104536 / JCM 13569 / NCTC 13031 / TMC 1543 / L948) (Mycobacterium abscessus)).